The chain runs to 872 residues: Alanine--tRNA ligase (872 aa).

Positions 567, 571, 669, and 673 each coordinate Zn(2+).

This sequence belongs to the class-II aminoacyl-tRNA synthetase family. The cofactor is Zn(2+).

The protein resides in the cytoplasm. The enzyme catalyses tRNA(Ala) + L-alanine + ATP = L-alanyl-tRNA(Ala) + AMP + diphosphate. Its function is as follows. Catalyzes the attachment of alanine to tRNA(Ala) in a two-step reaction: alanine is first activated by ATP to form Ala-AMP and then transferred to the acceptor end of tRNA(Ala). Also edits incorrectly charged Ser-tRNA(Ala) and Gly-tRNA(Ala) via its editing domain. The protein is Alanine--tRNA ligase of Streptococcus pyogenes serotype M4 (strain MGAS10750).